The sequence spans 138 residues: 6,7-dimethyl-8-ribityllumazine synthase (138 aa).

5-amino-6-(D-ribitylamino)uracil is bound by residues F13, 45–47, and 69–71; these read VFD and AVI. Residue 74–75 participates in (2S)-2-hydroxy-3-oxobutyl phosphate binding; that stretch reads AT. Catalysis depends on H77, which acts as the Proton donor. Residue L102 coordinates 5-amino-6-(D-ribitylamino)uracil. (2S)-2-hydroxy-3-oxobutyl phosphate is bound at residue R117.

Belongs to the DMRL synthase family.

It catalyses the reaction (2S)-2-hydroxy-3-oxobutyl phosphate + 5-amino-6-(D-ribitylamino)uracil = 6,7-dimethyl-8-(1-D-ribityl)lumazine + phosphate + 2 H2O + H(+). It participates in cofactor biosynthesis; riboflavin biosynthesis; riboflavin from 2-hydroxy-3-oxobutyl phosphate and 5-amino-6-(D-ribitylamino)uracil: step 1/2. In terms of biological role, catalyzes the formation of 6,7-dimethyl-8-ribityllumazine by condensation of 5-amino-6-(D-ribitylamino)uracil with 3,4-dihydroxy-2-butanone 4-phosphate. This is the penultimate step in the biosynthesis of riboflavin. The polypeptide is 6,7-dimethyl-8-ribityllumazine synthase (Methanobrevibacter smithii (strain ATCC 35061 / DSM 861 / OCM 144 / PS)).